Here is a 379-residue protein sequence, read N- to C-terminus: Guanine nucleotide-binding protein G(s) subunit alpha (379 aa).

The G-alpha domain maps to 38–379 (STHRLLLLGA…RMHLRQYELL (342 aa)). Residues 41–54 (RLLLLGAGESGKST) form a G1 motif region. Residues 46 to 53 (GAGESGKS), 182 to 188 (LRCRVLT), 207 to 211 (DVGGQ), 276 to 279 (NKQD), and Ala-351 each bind GTP. Ser-53 and Thr-188 together coordinate Mg(2+). Residues 180–188 (DILRCRVLT) form a G2 motif region. Residues 203-212 (FHMFDVGGQR) form a G3 motif region. Residues 272 to 279 (ILFLNKQD) form a G4 motif region. The interval 349–354 (TCAVDT) is G5 motif.

This sequence belongs to the G-alpha family. G(s) subfamily. As to quaternary structure, g proteins are composed of 3 units; alpha, beta and gamma. The alpha chain contains the guanine nucleotide binding site.

In terms of biological role, guanine nucleotide-binding proteins (G proteins) are involved as modulators or transducers in various transmembrane signaling systems. The G(s) protein is involved in hormonal regulation of adenylate cyclase: it activates the cyclase in response to beta-adrenergic stimuli. This is Guanine nucleotide-binding protein G(s) subunit alpha from Schistosoma mansoni (Blood fluke).